A 491-amino-acid polypeptide reads, in one-letter code: Probable aspartyl aminopeptidase (491 aa).

His-90 lines the Zn(2+) pocket. His-168 contributes to the substrate binding site. Residue Asp-278 coordinates Zn(2+). A substrate-binding site is contributed by Glu-315. Residues Glu-316 and Asp-361 each coordinate Zn(2+). Substrate-binding residues include Asp-361, His-364, Lys-389, and Tyr-396. Residue His-455 coordinates Zn(2+).

The protein belongs to the peptidase M18 family. Tetrahedron-shaped homododecamer built from six homodimers. Requires Zn(2+) as cofactor.

Its subcellular location is the cytoplasm. The enzyme catalyses Release of an N-terminal aspartate or glutamate from a peptide, with a preference for aspartate.. Its function is as follows. Likely to play an important role in intracellular protein and peptide metabolism. The polypeptide is Probable aspartyl aminopeptidase (Ricinus communis (Castor bean)).